We begin with the raw amino-acid sequence, 194 residues long: Molybdenum cofactor guanylyltransferase (194 aa).

GTP-binding positions include 12-14, Lys25, Asn53, Asp70, and Asp100; that span reads LAG. Asp100 contacts Mg(2+).

It belongs to the MobA family. Monomer. Mg(2+) serves as cofactor.

It is found in the cytoplasm. It catalyses the reaction Mo-molybdopterin + GTP + H(+) = Mo-molybdopterin guanine dinucleotide + diphosphate. Its function is as follows. Transfers a GMP moiety from GTP to Mo-molybdopterin (Mo-MPT) cofactor (Moco or molybdenum cofactor) to form Mo-molybdopterin guanine dinucleotide (Mo-MGD) cofactor. The sequence is that of Molybdenum cofactor guanylyltransferase from Aliivibrio fischeri (strain MJ11) (Vibrio fischeri).